Here is a 346-residue protein sequence, read N- to C-terminus: Glycerol-1-phosphate dehydrogenase [NAD(P)+] (346 aa).

NAD(+) contacts are provided by residues 93–97 (GSIID) and 115–118 (TTAS). Residue D120 coordinates substrate. Position 124 (S124) interacts with NAD(+). Substrate is bound at residue D167. The Zn(2+) site is built by D167 and H247. Residue H251 coordinates substrate. Residue H263 coordinates Zn(2+).

This sequence belongs to the glycerol-1-phosphate dehydrogenase family. Requires Zn(2+) as cofactor.

Its subcellular location is the cytoplasm. The catalysed reaction is sn-glycerol 1-phosphate + NAD(+) = dihydroxyacetone phosphate + NADH + H(+). It carries out the reaction sn-glycerol 1-phosphate + NADP(+) = dihydroxyacetone phosphate + NADPH + H(+). Its pathway is membrane lipid metabolism; glycerophospholipid metabolism. Its function is as follows. Catalyzes the NAD(P)H-dependent reduction of dihydroxyacetonephosphate (DHAP or glycerone phosphate) to glycerol 1-phosphate (G1P). The G1P thus generated is used as the glycerophosphate backbone of phospholipids in the cellular membranes of Archaea. The chain is Glycerol-1-phosphate dehydrogenase [NAD(P)+] from Pyrococcus horikoshii (strain ATCC 700860 / DSM 12428 / JCM 9974 / NBRC 100139 / OT-3).